Reading from the N-terminus, the 306-residue chain is Mitochondrial basic amino acids transporter (306 aa).

The next 6 membrane-spanning stretches (helical) occupy residues Ala-2 to Phe-22, Gly-61 to Gly-81, Phe-96 to Ala-116, Gly-153 to Tyr-172, Leu-187 to Thr-207, and Leu-255 to Tyr-275. Solcar repeat units follow at residues Ala-2–Ala-86, Asp-90–Ala-178, and Pro-190–Tyr-275. The tract at residues Asp-284–Leu-306 is disordered. A compositionally biased stretch (polar residues) spans Thr-291 to Leu-306.

The protein belongs to the mitochondrial carrier (TC 2.A.29) family. Widely expressed, with highest levels in the brain, including cortex, cerebellum, hippocampus and hypothalamus, and moderate levels in liver, kidney, heart and testis.

It is found in the mitochondrion inner membrane. It carries out the reaction L-lysine(out) + L-arginine(in) = L-lysine(in) + L-arginine(out). The catalysed reaction is L-histidine(out) + L-arginine(in) = L-histidine(in) + L-arginine(out). It catalyses the reaction L-ornithine(in) + L-arginine(out) = L-ornithine(out) + L-arginine(in). The enzyme catalyses L-homoarginine(in) + L-arginine(out) = L-homoarginine(out) + L-arginine(in). It carries out the reaction N(omega)-methyl-L-arginine(in) + L-arginine(out) = N(omega)-methyl-L-arginine(out) + L-arginine(in). The catalysed reaction is L-arginine(in) = L-arginine(out). It catalyses the reaction L-lysine(in) = L-lysine(out). The enzyme catalyses L-ornithine(in) = L-ornithine(out). It carries out the reaction L-histidine(out) = L-histidine(in). Its function is as follows. Mitochondrial transporter of arginine, lysine, homoarginine, methylarginine. Transports with a much lesser extent, ornithine and histidine. Does not transport carnitine nor acylcarnitines. Functions by both counter-exchange and uniport mechanisms. Plays a physiological role in the import of basic amino acids into mitochondria for mitochondrial protein synthesis and amino acid degradation. In Mus musculus (Mouse), this protein is Mitochondrial basic amino acids transporter (Slc25a29).